The sequence spans 215 residues: Ribosomal RNA small subunit methyltransferase G (215 aa).

S-adenosyl-L-methionine is bound by residues glycine 82, methionine 87, 133-134 (VE), and arginine 148.

It belongs to the methyltransferase superfamily. RNA methyltransferase RsmG family.

The protein resides in the cytoplasm. It catalyses the reaction guanosine(527) in 16S rRNA + S-adenosyl-L-methionine = N(7)-methylguanosine(527) in 16S rRNA + S-adenosyl-L-homocysteine. In terms of biological role, specifically methylates the N7 position of guanine in position 527 of 16S rRNA. The protein is Ribosomal RNA small subunit methyltransferase G of Stutzerimonas stutzeri (strain A1501) (Pseudomonas stutzeri).